Consider the following 154-residue polypeptide: NADPH-dependent 7-cyano-7-deazaguanine reductase (154 aa).

The Thioimide intermediate role is filled by Cys52. The active-site Proton donor is the Asp59. Residues 74–76 (VES) and 93–94 (HE) contribute to the substrate site.

This sequence belongs to the GTP cyclohydrolase I family. QueF type 1 subfamily.

The protein localises to the cytoplasm. The enzyme catalyses 7-aminomethyl-7-carbaguanine + 2 NADP(+) = 7-cyano-7-deazaguanine + 2 NADPH + 3 H(+). It functions in the pathway tRNA modification; tRNA-queuosine biosynthesis. Its function is as follows. Catalyzes the NADPH-dependent reduction of 7-cyano-7-deazaguanine (preQ0) to 7-aminomethyl-7-deazaguanine (preQ1). This is NADPH-dependent 7-cyano-7-deazaguanine reductase from Rhizobium rhizogenes (strain K84 / ATCC BAA-868) (Agrobacterium radiobacter).